The primary structure comprises 321 residues: Taste receptor type 2 member 135 (321 aa).

The Extracellular segment spans residues 1–28 (MGPIMSTGETSTAHTVLGCQITDKTVIT). The chain crosses the membrane as a helical span at residues 29–49 (LFVILVFSCLVAVVGNGFIII). At 50–75 (ALGMKWLLRRTLSAHNKLLISLAASR) the chain is on the cytoplasmic side. A helical transmembrane segment spans residues 76 to 96 (FCLQCVVIGKNIYVFLNPSSF). At 97–106 (PYNPVIQLLN) the chain is on the extracellular side. Residues 107-127 (LMWDFLTAATIWFCSLLGFFY) form a helical membrane-spanning segment. The Cytoplasmic segment spans residues 128–149 (CVKIATLTHPVFVWLKYRLPGW). The helical transmembrane segment at 150–170 (VPWMLLSAVGMSSLTSILCFI) threads the bilayer. At 171 to 207 (GNHMIYQNYARRGHQPWNATGNSLRHSLEKFYFISIK) the chain is on the extracellular side. Asn188 carries an N-linked (GlcNAc...) asparagine glycan. The chain crosses the membrane as a helical span at residues 208 to 228 (IIMWTVPTVIFSIFMSLLLVS). Residues 229–253 (LVRHMKKTLLALSELRDVWAQAHFK) lie on the Cytoplasmic side of the membrane. Residues 254-274 (ALLPLLSFIILFISCFLTLVL) form a helical membrane-spanning segment. Over 275 to 286 (SSASSTPYQEFR) the chain is Extracellular. The helical transmembrane segment at 287–307 (YWMWQVVIHLCTVIHPIVILL) threads the bilayer. Residues 308 to 321 (SNPVLRVVMKRGCC) lie on the Cytoplasmic side of the membrane.

Belongs to the G-protein coupled receptor T2R family.

It is found in the membrane. Its function is as follows. Putative taste receptor which may play a role in the perception of bitterness. This chain is Taste receptor type 2 member 135, found in Rattus norvegicus (Rat).